A 386-amino-acid chain; its full sequence is Succinate--CoA ligase [ADP-forming] subunit beta (386 aa).

Positions 9–244 (KDLLTSYAIP…PSQENVRDVL (236 aa)) constitute an ATP-grasp domain. Residues Lys46, 53-55 (GRG), Val102, and Glu107 contribute to the ATP site. Mg(2+)-binding residues include Asn199 and Asp213. Substrate contacts are provided by residues Asn264 and 321–323 (GIM).

Belongs to the succinate/malate CoA ligase beta subunit family. In terms of assembly, heterotetramer of two alpha and two beta subunits. Mg(2+) is required as a cofactor.

The enzyme catalyses succinate + ATP + CoA = succinyl-CoA + ADP + phosphate. It carries out the reaction GTP + succinate + CoA = succinyl-CoA + GDP + phosphate. It participates in carbohydrate metabolism; tricarboxylic acid cycle; succinate from succinyl-CoA (ligase route): step 1/1. In terms of biological role, succinyl-CoA synthetase functions in the citric acid cycle (TCA), coupling the hydrolysis of succinyl-CoA to the synthesis of either ATP or GTP and thus represents the only step of substrate-level phosphorylation in the TCA. The beta subunit provides nucleotide specificity of the enzyme and binds the substrate succinate, while the binding sites for coenzyme A and phosphate are found in the alpha subunit. The chain is Succinate--CoA ligase [ADP-forming] subunit beta from Chlamydia abortus (strain DSM 27085 / S26/3) (Chlamydophila abortus).